A 104-amino-acid polypeptide reads, in one-letter code: U20-lycotoxin-Ls1c (104 aa).

The N-terminal stretch at 1–30 is a signal peptide; it reads MFSTSDQVSKMNSRILSALLILGIATCVIA. The region spanning 31–76 is the WAP domain; the sequence is GGFCPKSRHPQCDLSYKINDCCAQSDCRVGSVCCVEGCGNVCRAES. Intrachain disulfides connect Cys-34–Cys-64, Cys-42–Cys-68, Cys-51–Cys-63, Cys-52–Cys-90, and Cys-57–Cys-72.

Belongs to the venom protein 11 family. 02 (wap-2) subfamily. In terms of processing, contains 5 disulfide bonds. Expressed by the venom gland.

It is found in the secreted. In terms of biological role, has antibacterial activity. In Lycosa singoriensis (Wolf spider), this protein is U20-lycotoxin-Ls1c.